Consider the following 237-residue polypeptide: D-aminoacyl-tRNA deacylase (237 aa).

It belongs to the DtdA deacylase family. Monomer. The cofactor is Zn(2+).

It catalyses the reaction a D-aminoacyl-tRNA + H2O = a tRNA + a D-alpha-amino acid + H(+). It carries out the reaction glycyl-tRNA(Ala) + H2O = tRNA(Ala) + glycine + H(+). D-aminoacyl-tRNA deacylase with broad substrate specificity. By recycling D-aminoacyl-tRNA to D-amino acids and free tRNA molecules, this enzyme counteracts the toxicity associated with the formation of D-aminoacyl-tRNA entities in vivo. The polypeptide is D-aminoacyl-tRNA deacylase (Sulfurisphaera tokodaii (strain DSM 16993 / JCM 10545 / NBRC 100140 / 7) (Sulfolobus tokodaii)).